We begin with the raw amino-acid sequence, 204 residues long: Probable nicotinate-nucleotide adenylyltransferase (204 aa).

Belongs to the NadD family.

The catalysed reaction is nicotinate beta-D-ribonucleotide + ATP + H(+) = deamido-NAD(+) + diphosphate. It participates in cofactor biosynthesis; NAD(+) biosynthesis; deamido-NAD(+) from nicotinate D-ribonucleotide: step 1/1. Catalyzes the reversible adenylation of nicotinate mononucleotide (NaMN) to nicotinic acid adenine dinucleotide (NaAD). The polypeptide is Probable nicotinate-nucleotide adenylyltransferase (Clostridium beijerinckii (strain ATCC 51743 / NCIMB 8052) (Clostridium acetobutylicum)).